The chain runs to 430 residues: Histidinol dehydrogenase (430 aa).

Tyr131, Gln192, and Asn215 together coordinate NAD(+). Substrate-binding residues include Ser238, Gln260, and His263. Zn(2+)-binding residues include Gln260 and His263. Residues Glu328 and His329 each act as proton acceptor in the active site. Substrate is bound by residues His329, Asp362, Glu416, and His421. Asp362 provides a ligand contact to Zn(2+). Position 421 (His421) interacts with Zn(2+).

Belongs to the histidinol dehydrogenase family. Zn(2+) is required as a cofactor.

It catalyses the reaction L-histidinol + 2 NAD(+) + H2O = L-histidine + 2 NADH + 3 H(+). The protein operates within amino-acid biosynthesis; L-histidine biosynthesis; L-histidine from 5-phospho-alpha-D-ribose 1-diphosphate: step 9/9. Its function is as follows. Catalyzes the sequential NAD-dependent oxidations of L-histidinol to L-histidinaldehyde and then to L-histidine. This is Histidinol dehydrogenase from Acinetobacter baylyi (strain ATCC 33305 / BD413 / ADP1).